A 256-amino-acid polypeptide reads, in one-letter code: tRNA (guanine-N(7)-)-methyltransferase (256 aa).

Positions 1–43 (MDVDPVNSEMELDNKPTCETVPGLPQKKHYRQRAHSNPHSDHD) are disordered. Positions 26 to 36 (QKKHYRQRAHS) are enriched in basic residues. S-adenosyl-L-methionine contacts are provided by residues Gly-74, 97 to 98 (EI), 132 to 133 (NA), and Leu-152. Asp-155 is a catalytic residue. 230-232 (TEE) is an S-adenosyl-L-methionine binding site.

This sequence belongs to the class I-like SAM-binding methyltransferase superfamily. TrmB family.

The protein localises to the nucleus. It carries out the reaction guanosine(46) in tRNA + S-adenosyl-L-methionine = N(7)-methylguanosine(46) in tRNA + S-adenosyl-L-homocysteine. It participates in tRNA modification; N(7)-methylguanine-tRNA biosynthesis. Functionally, catalyzes the formation of N(7)-methylguanine at position 46 (m7G46) in tRNA. The protein is tRNA (guanine-N(7)-)-methyltransferase of Caenorhabditis briggsae.